Here is a 123-residue protein sequence, read N- to C-terminus: Large ribosomal subunit protein eL8 (123 aa).

It belongs to the eukaryotic ribosomal protein eL8 family. As to quaternary structure, part of the 50S ribosomal subunit. Probably part of the RNase P complex.

The protein localises to the cytoplasm. Its function is as follows. Multifunctional RNA-binding protein that recognizes the K-turn motif in ribosomal RNA, the RNA component of RNase P, box H/ACA, box C/D and box C'/D' sRNAs. In Thermococcus gammatolerans (strain DSM 15229 / JCM 11827 / EJ3), this protein is Large ribosomal subunit protein eL8.